The sequence spans 423 residues: Serine--tRNA ligase (423 aa).

Residue Thr231–Glu233 coordinates L-serine. Arg262–Glu264 contributes to the ATP binding site. Residue Glu285 coordinates L-serine. Residue Glu349–Ser352 participates in ATP binding. Residue Ser385 participates in L-serine binding.

The protein belongs to the class-II aminoacyl-tRNA synthetase family. Type-1 seryl-tRNA synthetase subfamily. As to quaternary structure, homodimer. The tRNA molecule binds across the dimer.

The protein resides in the cytoplasm. It carries out the reaction tRNA(Ser) + L-serine + ATP = L-seryl-tRNA(Ser) + AMP + diphosphate + H(+). It catalyses the reaction tRNA(Sec) + L-serine + ATP = L-seryl-tRNA(Sec) + AMP + diphosphate + H(+). The protein operates within aminoacyl-tRNA biosynthesis; selenocysteinyl-tRNA(Sec) biosynthesis; L-seryl-tRNA(Sec) from L-serine and tRNA(Sec): step 1/1. Functionally, catalyzes the attachment of serine to tRNA(Ser). Is also able to aminoacylate tRNA(Sec) with serine, to form the misacylated tRNA L-seryl-tRNA(Sec), which will be further converted into selenocysteinyl-tRNA(Sec). The protein is Serine--tRNA ligase of Coxiella burnetii (strain RSA 331 / Henzerling II).